The chain runs to 247 residues: Transcription factor bHLH92 (247 aa).

Positions 85 to 134 (ERSRRHMLKERTRREKQKQSYLALHSLLPFATKNDKNSIVEKAVDEIAKL) constitute a bHLH domain.

In terms of assembly, homodimer.

The protein resides in the nucleus. The chain is Transcription factor bHLH92 (BHLH92) from Arabidopsis thaliana (Mouse-ear cress).